We begin with the raw amino-acid sequence, 201 residues long: Thioredoxin reductase-like selenoprotein T (201 aa).

A signal peptide spans 1–26 (MARSSGPLCLLLLGGLVAGILSGASA). A cross-link (cysteinyl-selenocysteine (Cys-Sec)) is located at residues 51 to 54 (CVSU). Position 54 (Sec54) is a non-standard amino acid, selenocysteine. A helical membrane pass occupies residues 96–116 (VFKLVLIGLIIAGKDPFAFFG).

It belongs to the SelWTH family. Selenoprotein T subfamily. In terms of processing, may contain a selenide-sulfide bond between Cys-51 and Sec-54. This bond is speculated to serve as redox-active pair.

Its subcellular location is the endoplasmic reticulum membrane. It catalyses the reaction [thioredoxin]-dithiol + NADP(+) = [thioredoxin]-disulfide + NADPH + H(+). In terms of biological role, selenoprotein with thioredoxin reductase-like oxidoreductase activity. This is Thioredoxin reductase-like selenoprotein T (selenot) from Xenopus tropicalis (Western clawed frog).